We begin with the raw amino-acid sequence, 328 residues long: Glucan endo-1,3-beta-glucosidase, basic isoform 3 (328 aa).

The active-site Proton donor is the glutamate 85. Glutamate 230 (nucleophile) is an active-site residue. The propeptide at 306–328 (VSERVWDISAETNSTTSSLISEM) is removed in mature form. Asparagine 318 is a glycosylation site (N-linked (GlcNAc...) asparagine).

It belongs to the glycosyl hydrolase 17 family.

It is found in the vacuole. The catalysed reaction is Hydrolysis of (1-&gt;3)-beta-D-glucosidic linkages in (1-&gt;3)-beta-D-glucans.. Functionally, is thought to be an important plant defense-related product against fungal pathogens. The sequence is that of Glucan endo-1,3-beta-glucosidase, basic isoform 3 (GLUB3) from Solanum tuberosum (Potato).